The sequence spans 724 residues: MPVRFKGLSEYQRNFLWKKSYLSESCNSSVGRKYPWAGLRSDQLGITKEPSFISKRRVPYHDPQISKSLEWNGAISESNVVASPEPEAPETPKSQEAEQKDVTQERVHSLEASRVPKRTRSHSADSRAEGASDVENNEGVTNHTPVNENVELEHSTKVLSENVDNGLDRLLRKKAGLTVVPSYNALRNSEYQRQFVWKTSKETAPAFSANQVFHNKSQFVPPFKGNSIIHETEYKRNFKGLSPVKEPKLRNDLRENRNLETVSPEKKSNKIDDPLKLEAEMELKDLHQPKKKLAPWKHQRLGKVNSEYRAKFLSPAQYLYKAGAWTRVKGNMPNQGSLNAMWYAEVKELREKAEFYRKRVQGTHFSRDHLNQILSDSNCCWDVSSTTSSEGTISSNIRALDLAGDPTSHKTLQKCPSTEPEEKGNIVEEQPQKNTTEKLGVSAPTIPVRRRLAWDTENTSEDVQKQPREKEEEDDDEEEGDRKTGKQAVRGEQEKLDVHEKSKADKMKEGSDSSVSSEKGGRLPTPKLRELGGIQRTHHDLTTPAVGGAVLVSPSKMKPPAPEQRKRMTSQDCLETSKNDFTKKESHAVSLLTSPAAGIKTVDPLPLREDSEDNIPKFAEATLPVSKIPEYPTNPPGQSPSPPHVPSYWYPSRRIQGSLRDPEFQHNVRKARMNNLRLPQHEAFNDEDEDRLSEISARSAASSLRAFQTLARAKKRKENFWGIT.

Residues 9–15 (SEYQRNF) carry the ST]-E-Y-X(3)-F motif 1; required for efficient microtubule binding and stabilization motif. Residues 79 to 152 (NVVASPEPEA…HTPVNENVEL (74 aa)) form a disordered region. Ser83 bears the Phosphoserine mark. A compositionally biased stretch (basic and acidic residues) spans 93 to 111 (KSQEAEQKDVTQERVHSLE). Residues Ser123 and Ser126 each carry the phosphoserine modification. Residues 138 to 147 (EGVTNHTPVN) are compositionally biased toward polar residues. The ST]-E-Y-X(3)-F motif 2; required for efficient microtubule binding and stabilization signature appears at 189–195 (SEYQRQF). The ST]-E-Y-X(3)-F motif 3; required for efficient microtubule binding motif lies at 232–238 (TEYKRNF). Ser242 and Ser263 each carry phosphoserine. An ST]-E-Y-X(3)-F motif 4; required for efficient microtubule binding and stabilization motif is present at residues 306-312 (SEYRAKF). The residue at position 314 (Ser314) is a Phosphoserine. Residues 340–364 (AMWYAEVKELREKAEFYRKRVQGTH) adopt a coiled-coil conformation. Positions 401 to 573 (DLAGDPTSHK…QRKRMTSQDC (173 aa)) are disordered. The span at 480 to 511 (GDRKTGKQAVRGEQEKLDVHEKSKADKMKEGS) shows a compositional bias: basic and acidic residues. 2 positions are modified to phosphoserine: Ser570 and Ser594. The interval 626–647 (SKIPEYPTNPPGQSPSPPHVPS) is disordered. The segment covering 632–645 (PTNPPGQSPSPPHV) has biased composition (pro residues). Ser658 carries the phosphoserine modification.

It belongs to the MDM1 family.

It is found in the nucleus. It localises to the cytoplasm. Its subcellular location is the cytoskeleton. The protein localises to the microtubule organizing center. The protein resides in the centrosome. It is found in the centriole. Microtubule-binding protein that negatively regulates centriole duplication. Binds to and stabilizes microtubules. This chain is Nuclear protein MDM1 (MDM1), found in Pongo abelii (Sumatran orangutan).